A 343-amino-acid polypeptide reads, in one-letter code: Cytoplasmic tRNA 2-thiolation protein 1 (343 aa).

The protein belongs to the TtcA family. CTU1/NCS6/ATPBD3 subfamily.

Its subcellular location is the cytoplasm. It functions in the pathway tRNA modification; 5-methoxycarbonylmethyl-2-thiouridine-tRNA biosynthesis. Its function is as follows. Plays a central role in 2-thiolation of mcm(5)S(2)U at tRNA wobble positions of tRNA(Lys), tRNA(Glu) and tRNA(Gln). Directly binds tRNAs and probably acts by catalyzing adenylation of tRNAs, an intermediate required for 2-thiolation. It is unclear whether it acts as a sulfurtransferase that transfers sulfur from thiocarboxylated URM1 onto the uridine of tRNAs at wobble position. This chain is Cytoplasmic tRNA 2-thiolation protein 1, found in Drosophila melanogaster (Fruit fly).